The sequence spans 265 residues: MNSPIDPAIVMPDVQSSADTRHIQIQRVGIRGVRHPMLVVAGDGSAQATVANWTLTVALPAEEKGTHMSRFVALLEKYRATPMTPALFSQMAREMLPLLHAERGDLTAAFPYFINKSAPVSGVQSLLDYEVIWTARAAGDEVEFELRVQVPVTSLCPCSKAISEYGAHNQRSHVTVSAVMEGDVAMDAIIRLVEDEGSCELWGLLKRPDEKYVTERAYDNPKFVEDLVRDVAARLKAHPSVARFCVEAENFESIHNHSAYAVVEG.

It belongs to the GTP cyclohydrolase IV family.

It catalyses the reaction GTP + H2O = 7,8-dihydroneopterin 3'-triphosphate + formate + H(+). Its pathway is cofactor biosynthesis; 7,8-dihydroneopterin triphosphate biosynthesis; 7,8-dihydroneopterin triphosphate from GTP: step 1/1. In terms of biological role, converts GTP to 7,8-dihydroneopterin triphosphate. The chain is GTP cyclohydrolase FolE2 from Bordetella avium (strain 197N).